We begin with the raw amino-acid sequence, 396 residues long: Protein NDRG1-A (396 aa).

The interval 326–396 (RSRTGSAASS…NSPKSMEVSC (71 aa)) is disordered. The segment covering 327-340 (SRTGSAASSSSQDG) has biased composition (low complexity). 4 repeat units span residues 340–349 (GNRSRSHTNE), 350–359 (GSRSRSHTGD), 360–369 (GNRSRAHTGD), and 370–379 (GNRSRSHTDT). The segment at 340–379 (GNRSRSHTNEGSRSRSHTGDGNRSRAHTGDGNRSRSHTDT) is 4 X 10 AA tandem repeats of G-[NS]-R-S-R-[AS]-H-T-[DGN]-[DET]. Residues 346–377 (HTNEGSRSRSHTGDGNRSRAHTGDGNRSRSHT) are compositionally biased toward basic and acidic residues. Residues 378–390 (DTNNINSDQNSPK) show a composition bias toward polar residues.

The protein belongs to the NDRG family.

In terms of biological role, may be involved in pronephros development, after specification of the pronephros. This Xenopus laevis (African clawed frog) protein is Protein NDRG1-A (ndrg1-a).